The sequence spans 227 residues: PKHD-type hydroxylase Caul_0045 (227 aa).

The 101-residue stretch at 78-178 (TILSPLFNRY…RTASFFWIQS (101 aa)) folds into the Fe2OG dioxygenase domain. Positions 96, 98, and 159 each coordinate Fe cation. R169 is a 2-oxoglutarate binding site.

Requires Fe(2+) as cofactor. It depends on L-ascorbate as a cofactor.

The sequence is that of PKHD-type hydroxylase Caul_0045 from Caulobacter sp. (strain K31).